Reading from the N-terminus, the 313-residue chain is Uracil-DNA glycosylase (313 aa).

The disordered stretch occupies residues 35–68 (DEPMPKKCRRPAGPPKGFISTRGDTSPSSDNNHI). Over residues 56–68 (RGDTSPSSDNNHI) the composition is skewed to polar residues. The Proton acceptor role is filled by Asp153.

It belongs to the uracil-DNA glycosylase (UDG) superfamily. UNG family.

Its subcellular location is the host nucleus. It carries out the reaction Hydrolyzes single-stranded DNA or mismatched double-stranded DNA and polynucleotides, releasing free uracil.. In terms of biological role, excises uracil residues from the DNA which can arise as a result of misincorporation of dUMP residues by DNA polymerase or deamination of cytosines. Therefore may reduce deleterious uracil incorporation into the viral genome, particularly in terminally differentiated cells which lack DNA repair enzymes. This Gallus gallus (Chicken) protein is Uracil-DNA glycosylase (MDV014).